The primary structure comprises 22 residues: Peptide PGLa-BM3 (22 aa).

Leucine 22 carries the post-translational modification Leucine amide.

In terms of tissue distribution, expressed by the skin glands.

Its subcellular location is the secreted. In terms of biological role, antimicrobial peptide. This is Peptide PGLa-BM3 from Xenopus boumbaensis (Mawa clawed frog).